Here is a 136-residue protein sequence, read N- to C-terminus: Secreted RxLR effector protein 63 (136 aa).

The first 21 residues, 1–21 (MQRFPYSLLLLLLSATNRSRR), serve as a signal peptide directing secretion. A RxLR motif is present at residues 43-46 (RMLR).

Belongs to the RxLR effector family.

The protein localises to the secreted. The protein resides in the host nucleus. Its function is as follows. Effector that partially suppresses the tobacco programmed cell death induced by cell death-inducing proteins. This Plasmopara viticola (Downy mildew of grapevine) protein is Secreted RxLR effector protein 63.